A 228-amino-acid polypeptide reads, in one-letter code: Protein ARV 2 (228 aa).

The next 2 membrane-spanning stretches (helical) occupy residues 37–57 (EVADEYVECELLIIFIDLILH) and 80–100 (LLWKLVLAYLLLDTYRSLLLR). A glycan (N-linked (GlcNAc...) asparagine) is linked at N107. Helical transmembrane passes span 123–143 (VLSANFAFVFSFAFAAKLMLV), 150–170 (ILLTILISSYVKIFLFAMPVW), and 176–196 (VIFIVDMLVLTSNAVALKVMT).

The protein belongs to the ARV1 family. Restricted to tissues in which cells are actively dividing or expanding. Mostly expressed in roots and flowers, and, to a lower extent, in stems and leaves.

Its subcellular location is the endoplasmic reticulum membrane. In terms of biological role, mediator of sterol homeostasis involved in sterol uptake, trafficking and distribution into membranes. Also regulates the sphingolipid metabolism. The protein is Protein ARV 2 of Arabidopsis thaliana (Mouse-ear cress).